The following is a 343-amino-acid chain: Alpha-tocopherol transfer protein-like (343 aa).

The disordered stretch occupies residues 1–29 (MSEESDSLRTSPSVASLSENELPLPPPDP). Residues 8–19 (LRTSPSVASLSE) are compositionally biased toward polar residues. The CRAL-TRIO domain occupies 118 to 283 (RPSALKDVLN…EYGGTAGELD (166 aa)).

May act as a protein that binds a hydrophobic ligand. The protein is Alpha-tocopherol transfer protein-like (Ttpal) of Mus musculus (Mouse).